We begin with the raw amino-acid sequence, 656 residues long: Probable Xaa-Pro aminopeptidase P (656 aa).

The Mn(2+) site is built by Asp-453, Asp-464, Glu-562, and Glu-576.

Belongs to the peptidase M24B family. Mn(2+) is required as a cofactor.

It carries out the reaction Release of any N-terminal amino acid, including proline, that is linked to proline, even from a dipeptide or tripeptide.. Catalyzes the removal of a penultimate prolyl residue from the N-termini of peptides. This is Probable Xaa-Pro aminopeptidase P (ampp) from Pyrenophora teres f. teres (strain 0-1) (Barley net blotch fungus).